Reading from the N-terminus, the 138-residue chain is Acidic phospholipase A2 CoaPLA2 (138 aa).

A signal peptide spans 1–16; sequence MRTLWIVAVLLLGVEG. Disulfide bonds link cysteine 42-cysteine 131, cysteine 44-cysteine 60, cysteine 59-cysteine 111, cysteine 65-cysteine 138, cysteine 66-cysteine 104, cysteine 73-cysteine 97, and cysteine 91-cysteine 102. 3 residues coordinate Ca(2+): tyrosine 43, glycine 45, and glycine 47. Residue histidine 63 is part of the active site. Aspartate 64 is a binding site for Ca(2+). Residue aspartate 105 is part of the active site.

It belongs to the phospholipase A2 family. Group II subfamily. D49 sub-subfamily. As to quaternary structure, homodimer. It depends on Ca(2+) as a cofactor. As to expression, expressed by the venom gland.

The protein localises to the secreted. It catalyses the reaction a 1,2-diacyl-sn-glycero-3-phosphocholine + H2O = a 1-acyl-sn-glycero-3-phosphocholine + a fatty acid + H(+). In terms of biological role, snake venom phospholipase A2 (PLA2) that shows very low inhibition of ADP-induced platelet aggregation in platelet-rich plasma of human, rabbit and guinea pig. Shows edema-inducing activity and myotoxicity. PLA2 catalyzes the calcium-dependent hydrolysis of the 2-acyl groups in 3-sn-phosphoglycerides. The sequence is that of Acidic phospholipase A2 CoaPLA2 from Crotalus lutosus abyssus (Grand Canyon rattlesnake).